Here is a 139-residue protein sequence, read N- to C-terminus: MATMQCDVVSVKESIYSGAVTMLIAKGAGGELGILPGHAPLVTLLQPGPIRVLLENGTEEIVYVSGGVLEVQPHVVTVLADTAIRADNLDEAAILEARKNAEQLLANQKSDLDSAAALAALAETAAQLETIRKIKNRAQ.

Belongs to the ATPase epsilon chain family. In terms of assembly, F-type ATPases have 2 components, CF(1) - the catalytic core - and CF(0) - the membrane proton channel. CF(1) has five subunits: alpha(3), beta(3), gamma(1), delta(1), epsilon(1). CF(0) has three main subunits: a, b and c.

Its subcellular location is the cell inner membrane. Produces ATP from ADP in the presence of a proton gradient across the membrane. This is ATP synthase epsilon chain from Acinetobacter baumannii (strain AB307-0294).